Consider the following 155-residue polypeptide: Microsomal glutathione S-transferase 1 (155 aa).

The Lumenal portion of the chain corresponds to 3 to 9; it reads NLSQLME. The chain crosses the membrane as a helical span at residues 10-33; it reads NEVFMAFASYTTIVLSKMNFMSTA. At 34-62 the chain is on the cytoplasmic side; sequence TAFYRLTKKVFANPEDCAGFGKGENAKKY. R38 is a glutathione binding site. Residues K42, K55, and K60 each carry the N6-acetyllysine modification. The helical transmembrane segment at 63-96 threads the bilayer; that stretch reads LRTDDRVERVRRAHLNDLENIVPFLGIGLLYSLS. The glutathione site is built by R73, R74, H76, and E81. Residues 97 to 99 lie on the Lumenal side of the membrane; it reads GPD. The chain crosses the membrane as a helical span at residues 100 to 123; it reads LSTAILHFRLFVRARIYHTIAYLT. Y121 is a glutathione binding site. Residues 124-128 lie on the Cytoplasmic side of the membrane; the sequence is PLPQP. The helical transmembrane segment at 129–148 threads the bilayer; it reads NRALAFFIGYGVTLSMAYRL. Over 149–155 the chain is Lumenal; the sequence is LKSKLYL.

The protein belongs to the MAPEG family. Homotrimer; The trimer binds only one molecule of glutathione.

The protein resides in the endoplasmic reticulum membrane. It is found in the mitochondrion outer membrane. It catalyses the reaction RX + glutathione = an S-substituted glutathione + a halide anion + H(+). Functionally, conjugation of reduced glutathione to a wide number of exogenous and endogenous hydrophobic electrophiles. In Bos taurus (Bovine), this protein is Microsomal glutathione S-transferase 1 (MGST1).